A 214-amino-acid chain; its full sequence is ATP phosphoribosyltransferase (214 aa).

Belongs to the ATP phosphoribosyltransferase family. Short subfamily. Heteromultimer composed of HisG and HisZ subunits.

The protein localises to the cytoplasm. It carries out the reaction 1-(5-phospho-beta-D-ribosyl)-ATP + diphosphate = 5-phospho-alpha-D-ribose 1-diphosphate + ATP. It participates in amino-acid biosynthesis; L-histidine biosynthesis; L-histidine from 5-phospho-alpha-D-ribose 1-diphosphate: step 1/9. Functionally, catalyzes the condensation of ATP and 5-phosphoribose 1-diphosphate to form N'-(5'-phosphoribosyl)-ATP (PR-ATP). Has a crucial role in the pathway because the rate of histidine biosynthesis seems to be controlled primarily by regulation of HisG enzymatic activity. This is ATP phosphoribosyltransferase from Halorhodospira halophila (strain DSM 244 / SL1) (Ectothiorhodospira halophila (strain DSM 244 / SL1)).